Reading from the N-terminus, the 343-residue chain is L-threonine 3-dehydrogenase (343 aa).

Cysteine 40 provides a ligand contact to Zn(2+). Residues threonine 42 and histidine 45 each act as charge relay system in the active site. 6 residues coordinate Zn(2+): histidine 65, glutamate 66, cysteine 95, cysteine 98, cysteine 101, and cysteine 109. Residues isoleucine 177, aspartate 197, arginine 202, 264–266, and 288–289 each bind NAD(+); these read LGI and IY.

It belongs to the zinc-containing alcohol dehydrogenase family. In terms of assembly, homotetramer. It depends on Zn(2+) as a cofactor.

The protein localises to the cytoplasm. The catalysed reaction is L-threonine + NAD(+) = (2S)-2-amino-3-oxobutanoate + NADH + H(+). It participates in amino-acid degradation; L-threonine degradation via oxydo-reductase pathway; glycine from L-threonine: step 1/2. Functionally, catalyzes the NAD(+)-dependent oxidation of L-threonine to 2-amino-3-ketobutyrate. This is L-threonine 3-dehydrogenase from Photobacterium profundum (strain SS9).